Reading from the N-terminus, the 105-residue chain is UPF0122 protein OB1530 (105 aa).

It belongs to the UPF0122 family.

In terms of biological role, might take part in the signal recognition particle (SRP) pathway. This is inferred from the conservation of its genetic proximity to ftsY/ffh. May be a regulatory protein. The protein is UPF0122 protein OB1530 of Oceanobacillus iheyensis (strain DSM 14371 / CIP 107618 / JCM 11309 / KCTC 3954 / HTE831).